A 214-amino-acid polypeptide reads, in one-letter code: Homeobox protein HEX homolog pha-2 (214 aa).

Disordered regions lie at residues 1 to 50 and 180 to 214; these read MDQK…QKME and RRVR…LSHG. Over residues 24-34 the composition is skewed to low complexity; it reads SSESPIPTGSE. Residues 35-44 are compositionally biased toward polar residues; sequence CSLNESSDTT. The segment at residues 124–183 is a DNA-binding region (homeobox); it reads RKGGQIRFTNEQTDALEHKFDSHKYLSPQERKKLAKSLSLSERQVKTWFQNRRAKWRRVR. A compositionally biased stretch (polar residues) spans 200–214; sequence SLGQLQSSNPFLSHG.

It is found in the nucleus. In terms of biological role, transcriptional repressor. Involved in pharyngeal development and required for the formation of the pharyngeal isthmus. Plays a role in modulating cytoskeleton in the muscle cells of the isthmus. Regulates expression of the acetylcholinesterase genes ace-1 and ace-2. May regulate its own expression. This Caenorhabditis elegans protein is Homeobox protein HEX homolog pha-2.